Here is a 197-residue protein sequence, read N- to C-terminus: 7-methyl-GTP pyrophosphatase (197 aa).

The active-site Proton acceptor is the Asp-74.

It belongs to the Maf family. YceF subfamily. Requires a divalent metal cation as cofactor.

It localises to the cytoplasm. It catalyses the reaction N(7)-methyl-GTP + H2O = N(7)-methyl-GMP + diphosphate + H(+). Nucleoside triphosphate pyrophosphatase that hydrolyzes 7-methyl-GTP (m(7)GTP). May have a dual role in cell division arrest and in preventing the incorporation of modified nucleotides into cellular nucleic acids. The protein is 7-methyl-GTP pyrophosphatase of Saccharophagus degradans (strain 2-40 / ATCC 43961 / DSM 17024).